Reading from the N-terminus, the 157-residue chain is Secreted effector protein See1 (157 aa).

An N-terminal signal peptide occupies residues 1 to 21 (MLFTTFVSLLLVILCLVHVSA). The interval 124–157 (SYRYGDSHGNSREAEYSVADHQSASGEYKFGPTT) is disordered. The segment covering 128–138 (GDSHGNSREAE) has biased composition (basic and acidic residues).

As to quaternary structure, interacts with a maize homolog of SGT1, a factor acting in cell cycle progression in yeast Saccharomyces cerevisiae and an important component of plant and human innate immunity.

The protein resides in the secreted. The protein localises to the host cytoplasm. It is found in the host nucleus. Its function is as follows. Effector protein involved in the induction of tumors in infected plant tissues by the fungus. Required for the reactivation of plant DNA synthesis, which is crucial for tumor progression in leaf cells. Interferes with the MAPK-triggered phosphorylation of maize SGT1 at a monocot-specific phosphorylation site, resulting in both modulation of immune responses and reactivation of DNA synthesis during leaf tumor formation. In Mycosarcoma maydis (Corn smut fungus), this protein is Secreted effector protein See1.